Reading from the N-terminus, the 38-residue chain is Photosystem II reaction center protein L (38 aa).

The chain crosses the membrane as a helical span at residues 17 to 37 (SLFWGLLLIFVLAILFSSYIF).

It belongs to the PsbL family. In terms of assembly, PSII is composed of 1 copy each of membrane proteins PsbA, PsbB, PsbC, PsbD, PsbE, PsbF, PsbH, PsbI, PsbJ, PsbK, PsbL, PsbM, PsbT, PsbX, PsbY, PsbZ, Psb30/Ycf12, at least 3 peripheral proteins of the oxygen-evolving complex and a large number of cofactors. It forms dimeric complexes.

The protein localises to the plastid. It is found in the cyanelle thylakoid membrane. In terms of biological role, one of the components of the core complex of photosystem II (PSII). PSII is a light-driven water:plastoquinone oxidoreductase that uses light energy to abstract electrons from H(2)O, generating O(2) and a proton gradient subsequently used for ATP formation. It consists of a core antenna complex that captures photons, and an electron transfer chain that converts photonic excitation into a charge separation. This subunit is found at the monomer-monomer interface and is required for correct PSII assembly and/or dimerization. The sequence is that of Photosystem II reaction center protein L from Cyanophora paradoxa.